The primary structure comprises 931 residues: Translation initiation factor IF-2 (931 aa).

The disordered stretch occupies residues 32 to 310 (KSASSTVEPP…SSKARKNRLA (279 aa)). Over residues 50–59 (FASSGQGNAS) the composition is skewed to polar residues. A compositionally biased stretch (pro residues) spans 82–96 (PAAPSAPKPAAPAAP). Over residues 156–168 (GNAPQGGNNANGA) the composition is skewed to low complexity. Composition is skewed to gly residues over residues 217 to 238 (RPGQ…GGAK), 248 to 271 (GQGG…GFQG), and 281 to 298 (ARGG…GRQG). One can recognise a tr-type G domain in the interval 424–596 (PRPPVVTVMG…VLLTADAELD (173 aa)). The G1 stretch occupies residues 433-440 (GHVDHGKT). Position 433 to 440 (433 to 440 (GHVDHGKT)) interacts with GTP. Positions 458-462 (GITQR) are G2. A G3 region spans residues 483-486 (DTPG). GTP-binding positions include 483–487 (DTPGH) and 537–540 (NKID). Residues 537-540 (NKID) form a G4 region. The segment at 573–575 (SAK) is G5.

Belongs to the TRAFAC class translation factor GTPase superfamily. Classic translation factor GTPase family. IF-2 subfamily.

It is found in the cytoplasm. One of the essential components for the initiation of protein synthesis. Protects formylmethionyl-tRNA from spontaneous hydrolysis and promotes its binding to the 30S ribosomal subunits. Also involved in the hydrolysis of GTP during the formation of the 70S ribosomal complex. The protein is Translation initiation factor IF-2 of Bifidobacterium adolescentis (strain ATCC 15703 / DSM 20083 / NCTC 11814 / E194a).